The following is a 122-amino-acid chain: Large ribosomal subunit protein uL14 (122 aa).

Belongs to the universal ribosomal protein uL14 family. As to quaternary structure, part of the 50S ribosomal subunit. Forms a cluster with proteins L3 and L19. In the 70S ribosome, L14 and L19 interact and together make contacts with the 16S rRNA in bridges B5 and B8.

Binds to 23S rRNA. Forms part of two intersubunit bridges in the 70S ribosome. This chain is Large ribosomal subunit protein uL14, found in Lactobacillus helveticus (strain DPC 4571).